A 253-amino-acid polypeptide reads, in one-letter code: E3 ubiquitin-protein ligase MARCHF3 (253 aa).

An RING-CH-type zinc finger spans residues 63–123 (SPFNDRPMCR…ELCHFRFAVE (61 aa)). Residues C71, C74, C87, C89, H97, C100, C113, and C116 each contribute to the Zn(2+) site. A run of 2 helical transmembrane segments spans residues 145-165 (LFGD…SGWL) and 182-202 (AVGL…WTLV). Phosphoserine is present on residues S237 and S243.

Interacts with MARCHF2 and STX6.

The protein localises to the cytoplasmic vesicle membrane. It is found in the early endosome membrane. The catalysed reaction is S-ubiquitinyl-[E2 ubiquitin-conjugating enzyme]-L-cysteine + [acceptor protein]-L-lysine = [E2 ubiquitin-conjugating enzyme]-L-cysteine + N(6)-ubiquitinyl-[acceptor protein]-L-lysine.. Its pathway is protein modification; protein ubiquitination. E3 ubiquitin-protein ligase which may be involved in endosomal trafficking. E3 ubiquitin ligases accept ubiquitin from an E2 ubiquitin-conjugating enzyme in the form of a thioester and then directly transfer the ubiquitin to targeted substrates. This chain is E3 ubiquitin-protein ligase MARCHF3, found in Homo sapiens (Human).